An 872-amino-acid polypeptide reads, in one-letter code: Probable GPI-anchored adhesin-like protein PGA25 (872 aa).

The first 19 residues, 1 to 19 (MKVTAVSSVLLTVAALTNA), serve as a signal peptide directing secretion. A compositionally biased stretch (low complexity) spans 43-65 (PAAAPAAQPAAQPTTQSPADQPT). 3 disordered regions span residues 43-383 (PAAA…TIIP), 492-517 (KPTG…DETD), and 623-809 (PDDW…ECDT). Residues 66-83 (VQSPVSSDQPSTAQPVAQ) are compositionally biased toward polar residues. 2 stretches are compositionally biased toward low complexity: residues 84–110 (NNLL…TRST) and 125–171 (SSEA…SSSS). Asparagine 92 is a glycosylation site (N-linked (GlcNAc...) asparagine). Over residues 196–207 (ETDDEDCVEETE) the composition is skewed to acidic residues. 3 stretches are compositionally biased toward low complexity: residues 208–225 (SPTS…VATT), 242–260 (SSAP…SSTT), and 274–293 (SSVP…NTTT). The N-linked (GlcNAc...) asparagine glycan is linked to asparagine 290. Residues 317-328 (AEEDDEECEDPT) are compositionally biased toward acidic residues. Over residues 349 to 363 (TSQSKTSVSSVVSKS) the composition is skewed to low complexity. The segment covering 366-376 (EDDDDETECET) has biased composition (acidic residues). Positions 495 to 506 (GSGSITVLPTKS) are enriched in polar residues. Acidic residues-rich tracts occupy residues 624 to 635 (DDWEDDGYEGED) and 646 to 659 (DDGE…DDGE). Gly residues-rich tracts occupy residues 666 to 692 (SSSG…GSGS), 701 to 710 (SSGGTWGGSG), and 731 to 740 (SWWGGSGSGS). A compositionally biased stretch (low complexity) spans 741 to 760 (SSGSSSGVSSGDSGSSSVTG). Over residues 761–771 (GSSGSWWGGSG) the composition is skewed to gly residues. Acidic residues predominate over residues 780 to 808 (DGYDDEDDQTPEPECDDEDDSWDDDEECD). Alanine 845 is lipidated: GPI-anchor amidated alanine. A propeptide spans 846-872 (QSVTQIENIGGKVSASGLFVVLGLLLI) (removed in mature form).

The protein belongs to the HYR1/IFF family. Post-translationally, the GPI-anchor is attached to the protein in the endoplasmic reticulum and serves to target the protein to the cell surface. There, the glucosamine-inositol phospholipid moiety is cleaved off and the GPI-modified mannoprotein is covalently attached via its lipidless GPI glycan remnant to the 1,6-beta-glucan of the outer cell wall layer.

Its subcellular location is the secreted. The protein localises to the cell wall. It is found in the membrane. Functionally, probable GPI-anchored cell wall protein involved in cell wall organization, hyphal growth, as well as in host-fungal interaction and virulence. In Candida albicans (strain SC5314 / ATCC MYA-2876) (Yeast), this protein is Probable GPI-anchored adhesin-like protein PGA25 (PGA25).